We begin with the raw amino-acid sequence, 107 residues long: Large ribosomal subunit protein uL24 (107 aa).

It belongs to the universal ribosomal protein uL24 family. In terms of assembly, part of the 50S ribosomal subunit.

Its function is as follows. One of two assembly initiator proteins, it binds directly to the 5'-end of the 23S rRNA, where it nucleates assembly of the 50S subunit. One of the proteins that surrounds the polypeptide exit tunnel on the outside of the subunit. This chain is Large ribosomal subunit protein uL24, found in Kosmotoga olearia (strain ATCC BAA-1733 / DSM 21960 / TBF 19.5.1).